The primary structure comprises 508 residues: Photosystem II CP47 reaction center protein (508 aa).

Helical transmembrane passes span 21–36 (AVHLMHTALVAGWAGS), 101–115 (IVLSGLLFLAAVWHW), 140–156 (GIHLFLSGLLCFGFGAF), 203–218 (IAAGVVGIVAGLFHLT), 237–252 (VLSSSLAAVFFAAFVV), and 457–472 (SFALLFFFGHIWHGSR).

The protein belongs to the PsbB/PsbC family. PsbB subfamily. As to quaternary structure, PSII is composed of 1 copy each of membrane proteins PsbA, PsbB, PsbC, PsbD, PsbE, PsbF, PsbH, PsbI, PsbJ, PsbK, PsbL, PsbM, PsbT, PsbX, PsbY, PsbZ, Psb30/Ycf12, peripheral proteins PsbO, CyanoQ (PsbQ), PsbU, PsbV and a large number of cofactors. It forms dimeric complexes. It depends on Binds multiple chlorophylls. PSII binds additional chlorophylls, carotenoids and specific lipids. as a cofactor.

The protein resides in the cellular thylakoid membrane. In terms of biological role, one of the components of the core complex of photosystem II (PSII). It binds chlorophyll and helps catalyze the primary light-induced photochemical processes of PSII. PSII is a light-driven water:plastoquinone oxidoreductase, using light energy to abstract electrons from H(2)O, generating O(2) and a proton gradient subsequently used for ATP formation. In Synechococcus elongatus (strain ATCC 33912 / PCC 7942 / FACHB-805) (Anacystis nidulans R2), this protein is Photosystem II CP47 reaction center protein.